The following is a 105-amino-acid chain: Small ribosomal subunit protein eS24 (105 aa).

Belongs to the eukaryotic ribosomal protein eS24 family.

The protein is Small ribosomal subunit protein eS24 of Haloquadratum walsbyi (strain DSM 16790 / HBSQ001).